The following is a 306-amino-acid chain: Homoserine O-succinyltransferase (306 aa).

Cys142 serves as the catalytic Acyl-thioester intermediate. Substrate-binding residues include Lys163 and Ser192. The active-site Proton acceptor is His233. Glu235 is an active-site residue. Arg247 serves as a coordination point for substrate.

The protein belongs to the MetA family.

Its subcellular location is the cytoplasm. The enzyme catalyses L-homoserine + succinyl-CoA = O-succinyl-L-homoserine + CoA. It participates in amino-acid biosynthesis; L-methionine biosynthesis via de novo pathway; O-succinyl-L-homoserine from L-homoserine: step 1/1. In terms of biological role, transfers a succinyl group from succinyl-CoA to L-homoserine, forming succinyl-L-homoserine. The protein is Homoserine O-succinyltransferase of Pelagibacterium halotolerans (strain DSM 22347 / JCM 15775 / CGMCC 1.7692 / B2).